The following is a 469-amino-acid chain: MWKEKVQQYEDQIINDLKGLLAIESVRDDAKASEDAPVGPGPRKALDYMYEIAHRDGFTTHDVDHIAGRIEAGKGNDVLGILCHVDVVPAGDGWDSNPFEPVVTEDAIIARGTLDDKGPTIAAYYAIKILEDMNVDWKKRIHMIIGTDEESDWKCTDRYFKTEEMPTLGFAPDAEFPCIHGEKGITTFDLVQNKLAEDQDEPDYELITFKSGERYNMVPDHAEARVLVKENMTDVIQDFEYFLEQNHLQGDSTVDSGILVLTVEGKAVHGMDPSIGVNAGLYLLKFLASLNLDNNAQAFVAFSNRYLFDSDFGEKMGMKFHTDVMGDVTNNIGVITYDNENAGLFGINLRYPEGFEFEKAMDRFANEIQQYGFEVKLGKVQPPHYVDKNDPFVQKLVTAYRNQTNDMTEPYTIGGGTYARNLDKGVAFGAMFSDSEDLMHQKNEYITKKQLFNATSIYLEAIYSLCVEE.

His84 is a Zn(2+) binding site. Residue Asp86 is part of the active site. Asp115 is a Zn(2+) binding site. The active-site Proton acceptor is Glu149. Residues Glu150, Asp173, and His440 each contribute to the Zn(2+) site.

This sequence belongs to the peptidase M20A family. The cofactor is Zn(2+).

This is Putative dipeptidase MW1694 from Staphylococcus aureus (strain MW2).